Reading from the N-terminus, the 138-residue chain is Small ribosomal subunit protein uS11c (138 aa).

It belongs to the universal ribosomal protein uS11 family. In terms of assembly, part of the 30S ribosomal subunit.

The protein localises to the plastid. It is found in the chloroplast. The protein is Small ribosomal subunit protein uS11c of Phaseolus vulgaris (Kidney bean).